A 657-amino-acid chain; its full sequence is Leishmanolysin (657 aa).

A signal peptide spans 1-41 (MSVDSSSSSTHRRRCVAARLVRLAAAGAAVTVAVGTAAAWA). The propeptide at 42–102 (HAGALQHRCI…DPRPGSAPTV (61 aa)) is activation peptide. The Extracellular portion of the chain corresponds to 44–611 (GALQHRCIHD…DRMVGLATAA (568 aa)). N-linked (GlcNAc...) asparagine glycosylation is present at Asn107. Cystine bridges form between Cys127–Cys144 and Cys193–Cys232. Zn(2+) is bound at residue His266. Glu267 is an active-site residue. His270 is a binding site for Zn(2+). The N-linked (GlcNAc...) asparagine glycan is linked to Asn302. 7 disulfide bridges follow: Cys316/Cys388, Cys395/Cys458, Cys408/Cys427, Cys417/Cys492, Cys469/Cys513, Cys518/Cys568, and Cys538/Cys561. A Zn(2+)-binding site is contributed by His336. N-linked (GlcNAc...) asparagine glycans are attached at residues Asn399, Asn409, Asn445, Asn466, and Asn501. A helical transmembrane segment spans residues 612–632 (TVLLGMVLSLMALVVVWLLLV). At 633 to 657 (SCPWWCCKLGGPPASVTPACSPETE) the chain is on the cytoplasmic side.

It belongs to the peptidase M8 family. Requires Zn(2+) as cofactor.

It is found in the membrane. It carries out the reaction Preference for hydrophobic residues at P1 and P1' and basic residues at P2' and P3'. A model nonapeptide is cleaved at -Ala-Tyr-|-Leu-Lys-Lys-.. Its function is as follows. Has an integral role during the infection of macrophages in the mammalian host. This Leishmania tropica protein is Leishmanolysin (mspC).